Reading from the N-terminus, the 333-residue chain is Phosphate acyltransferase (333 aa).

This sequence belongs to the PlsX family. In terms of assembly, homodimer. Probably interacts with PlsY.

Its subcellular location is the cytoplasm. The catalysed reaction is a fatty acyl-[ACP] + phosphate = an acyl phosphate + holo-[ACP]. Its pathway is lipid metabolism; phospholipid metabolism. Catalyzes the reversible formation of acyl-phosphate (acyl-PO(4)) from acyl-[acyl-carrier-protein] (acyl-ACP). This enzyme utilizes acyl-ACP as fatty acyl donor, but not acyl-CoA. The chain is Phosphate acyltransferase from Lactobacillus johnsonii (strain CNCM I-12250 / La1 / NCC 533).